Here is a 257-residue protein sequence, read N- to C-terminus: 5-oxoprolinase subunit A (257 aa).

The protein belongs to the LamB/PxpA family. Forms a complex composed of PxpA, PxpB and PxpC.

It catalyses the reaction 5-oxo-L-proline + ATP + 2 H2O = L-glutamate + ADP + phosphate + H(+). In terms of biological role, catalyzes the cleavage of 5-oxoproline to form L-glutamate coupled to the hydrolysis of ATP to ADP and inorganic phosphate. This Natranaerobius thermophilus (strain ATCC BAA-1301 / DSM 18059 / JW/NM-WN-LF) protein is 5-oxoprolinase subunit A.